Here is a 452-residue protein sequence, read N- to C-terminus: Trigger factor (452 aa).

Residues 171 to 256 (GDRVKVNFKG…ATAIETPEEK (86 aa)) form the PPIase FKBP-type domain.

This sequence belongs to the FKBP-type PPIase family. Tig subfamily.

Its subcellular location is the cytoplasm. The enzyme catalyses [protein]-peptidylproline (omega=180) = [protein]-peptidylproline (omega=0). In terms of biological role, involved in protein export. Acts as a chaperone by maintaining the newly synthesized protein in an open conformation. Functions as a peptidyl-prolyl cis-trans isomerase. The sequence is that of Trigger factor from Bradyrhizobium sp. (strain BTAi1 / ATCC BAA-1182).